A 461-amino-acid polypeptide reads, in one-letter code: pre-mRNA splicing regulator USH1G (461 aa).

ANK repeat units lie at residues 31–60 (DGMT…DPDK), 64–93 (WGNT…NIWC), and 97–126 (DYHT…KQSS). Disordered stretches follow at residues 208–243 (GTAR…SARS) and 332–368 (EDGG…DRSC). The segment covering 210–222 (ARGKTKMQKKLER) has biased composition (basic residues). Residues 385 to 447 (LEPETSPLET…KILGAVRRRR (63 aa)) form the SAM domain. Ser-422 carries the post-translational modification Phosphoserine; by CK2.

Part of a complex composed of USH1C, USH1G and MYO7A. Interacts with USH1C (via the first PDZ domain). Interacts with PDZD7. Interacts with CDH23 and PCDH15; these interactions may recruit USH1G to the plasma membrane. Interacts with intraflagellar transport proteins IFT20, IFT52 and IFT57. Interacts with splicing factors SF3B1, PRPF6, PRPF31 and SON. Interacts with the U4/U6.U5 tri-small nuclear ribonucleoprotein (tri-snRNP) complex in the presence of pre-mRNAs. Interacts (via SAM domain) with MAGI2 (via PDZ 6 domain); the interaction is triggered by phosphorylation of USH1G by CK2 and negatively regulates MAGI2-mediated endocytosis. In terms of tissue distribution, expressed in vestibule of the inner ear, eye and small intestine.

Its subcellular location is the cytoplasm. The protein resides in the cytosol. It localises to the cytoskeleton. The protein localises to the cell membrane. It is found in the cell projection. Its subcellular location is the cilium. The protein resides in the nucleus speckle. It localises to the nucleus. The protein localises to the cajal body. It is found in the microtubule organizing center. Its subcellular location is the centrosome. The protein resides in the photoreceptor inner segment. Its function is as follows. Plays a role in pre-mRNA splicing by regulating the release and transfer of U4/U6.U5 tri-small nuclear ribonucleoprotein (tri-snRNP) complexes from their assembly site in Cajal bodies to nuclear speckles, thereby contributing to the assembly of the pre-catalytic spliceosome on target pre-mRNAs. May also participate in recycling of snRNPs back to Cajal bodies during splicing. Plays a role in regulating MAGI2-mediated endocytosis. Anchoring/scaffolding protein that is a part of the functional network formed by USH1C, USH1G, CDH23 and MYO7A that mediates mechanotransduction in cochlear hair cells. Required for normal development and maintenance of cochlear hair cell bundles. Required for normal hearing. The polypeptide is pre-mRNA splicing regulator USH1G (USH1G) (Homo sapiens (Human)).